The sequence spans 465 residues: Argininosuccinate lyase (465 aa).

Belongs to the lyase 1 family. Argininosuccinate lyase subfamily.

The protein resides in the cytoplasm. The catalysed reaction is 2-(N(omega)-L-arginino)succinate = fumarate + L-arginine. The protein operates within amino-acid biosynthesis; L-arginine biosynthesis; L-arginine from L-ornithine and carbamoyl phosphate: step 3/3. In Rhodopseudomonas palustris (strain BisB5), this protein is Argininosuccinate lyase.